The following is a 701-amino-acid chain: Glycine--tRNA ligase beta subunit (701 aa).

This sequence belongs to the class-II aminoacyl-tRNA synthetase family. In terms of assembly, tetramer of two alpha and two beta subunits.

The protein localises to the cytoplasm. The catalysed reaction is tRNA(Gly) + glycine + ATP = glycyl-tRNA(Gly) + AMP + diphosphate. In Anaeromyxobacter dehalogenans (strain 2CP-C), this protein is Glycine--tRNA ligase beta subunit.